Reading from the N-terminus, the 315-residue chain is Phosphomutase-like protein 3 (315 aa).

A signal peptide spans 1–19; it reads MQQFLTLGALWTLFNVATT. Histidine 77 functions as the Tele-phosphohistidine intermediate in the catalytic mechanism. 2 N-linked (GlcNAc...) asparagine glycosylation sites follow: asparagine 88 and asparagine 154. The active-site Proton donor/acceptor is glutamate 173. N-linked (GlcNAc...) asparagine glycosylation is present at asparagine 185. Asparagine 286 is lipidated: GPI-anchor amidated asparagine. A propeptide spans 287–315 (removed in mature form); sequence DAWDTFKDWCPNPPASISGTATSTATGSA.

This sequence belongs to the phosphoglycerate mutase family.

Its subcellular location is the cell membrane. This is Phosphomutase-like protein 3 (PGA12) from Candida albicans (strain SC5314 / ATCC MYA-2876) (Yeast).